The following is a 153-amino-acid chain: UPF0756 membrane protein Bcer98_3279 (153 aa).

The next 4 membrane-spanning stretches (helical) occupy residues Phe-8–Ile-28, Leu-54–Phe-74, Trp-87–Leu-107, and Leu-117–Ile-137.

Belongs to the UPF0756 family.

It localises to the cell membrane. In Bacillus cytotoxicus (strain DSM 22905 / CIP 110041 / 391-98 / NVH 391-98), this protein is UPF0756 membrane protein Bcer98_3279.